The sequence spans 1204 residues: Bromodomain and PHD finger-containing protein 3 (1204 aa).

Disordered regions lie at residues 1 to 27 (MRKP…KCSP) and 76 to 127 (SNKE…TGSQ). Positions 89 to 99 (KSKKPSSKGKR) are enriched in basic residues. Residues 212 to 262 (DAFCCVCLDDECHNSNVILFCDICNLAVHQECYGVPYIPEGQWLCRCCLQS) form a PHD-type 1 zinc finger. The segment at 266–299 (PVDCVLCPNKGGAFKQTSDGHWAHVVCAIWIPEV) adopts a C2HC pre-PHD-type zinc-finger fold. Residues 323–387 (LTCYICKQKG…RKTAYCEAHS (65 aa)) form a PHD-type 2 zinc finger. Residues 393 to 464 (ARRKGDSPRS…KKEPEEAGRE (72 aa)) are disordered. Phosphoserine occurs at positions 399 and 402. Over residues 417–429 (GEEEQEEAEEEGQ) the composition is skewed to acidic residues. The span at 442-454 (VSKKGKMSLKQKI) shows a compositional bias: basic residues. Lysine 445, lysine 447, and lysine 670 each carry N6-acetyllysine. Residues 588-692 (LELMPFTVLL…DLGGAILRHA (105 aa)) form the Bromo domain. Phosphoserine is present on residues serine 712 and serine 739. Residues 778–879 (RQKLAQPPPP…FLKSRKVEDE (102 aa)) are disordered. Residues 816–826 (QQEEPEEEGDR) show a composition bias toward acidic residues. Phosphoserine occurs at positions 899, 961, and 964. Residues 903 to 1015 (IDRLSLTNPD…ESGSDSECSL (113 aa)) are disordered. Over residues 979–990 (SCSDSEGERSPQ) the composition is skewed to basic and acidic residues. Positions 1075 to 1158 (PLELVWAKCR…RDKVLPLGVE (84 aa)) constitute a PWWP domain.

In terms of assembly, component of some HBO1 complexes composed of KAT7/HBO1, MEAF6, ING4 or ING5, and BRPF3. Component of the MOZ/MORF complex composed at least of ING5, KAT6A, KAT6B, MEAF6 and one of BRPF1, BRD1/BRPF2 and BRPF3. Interacts with KAT7/HBO1; the interaction is direct. As to expression, highly expressed in the adult testis and brain.

The protein localises to the nucleus. Its function is as follows. Scaffold subunit of various histone acetyltransferase (HAT) complexes, such as the MOZ/MORF and HBO1 complexes, which have a histone H3 acetyltransferase activity. Plays a role in DNA replication initiation by directing KAT7/HBO1 specificity towards histone H3 'Lys-14' acetylation (H3K14ac), thereby facilitating the activation of replication origins. Component of the MOZ/MORF complex which has a histone H3 acetyltransferase activity. The polypeptide is Bromodomain and PHD finger-containing protein 3 (Mus musculus (Mouse)).